Here is a 239-residue protein sequence, read N- to C-terminus: Phosphoribosylaminoimidazole-succinocarboxamide synthase (239 aa).

The protein belongs to the SAICAR synthetase family.

It catalyses the reaction 5-amino-1-(5-phospho-D-ribosyl)imidazole-4-carboxylate + L-aspartate + ATP = (2S)-2-[5-amino-1-(5-phospho-beta-D-ribosyl)imidazole-4-carboxamido]succinate + ADP + phosphate + 2 H(+). Its pathway is purine metabolism; IMP biosynthesis via de novo pathway; 5-amino-1-(5-phospho-D-ribosyl)imidazole-4-carboxamide from 5-amino-1-(5-phospho-D-ribosyl)imidazole-4-carboxylate: step 1/2. The sequence is that of Phosphoribosylaminoimidazole-succinocarboxamide synthase from Bacillus mycoides (strain KBAB4) (Bacillus weihenstephanensis).